The primary structure comprises 149 residues: Oligosaccharyltransferase complex subunit ostc-A (149 aa).

Over 1 to 32 (MESLYRVPFTVLECPNLKLKKPSWLHMPSAMT) the chain is Cytoplasmic. Residues 33–53 (VYAMVVVSYFLITGGIIYDVI) form a helical membrane-spanning segment. Residues 54-83 (VEPPSVGSMTDEHGHQRPVAFLAYRVNGQY) are Extracellular-facing. Residues 84-104 (IMEGLASSFLFTMGGLGFIIL) traverse the membrane as a helical segment. Residues 105–117 (DRSNTPNIPKLNR) are Cytoplasmic-facing. A helical transmembrane segment spans residues 118-138 (FLLLFIGFVCVLLSFFMARVF). Topologically, residues 139–149 (MRMKLPGYLMG) are extracellular.

This sequence belongs to the OSTC family. In terms of assembly, specific component of the STT3A-containing form of the oligosaccharyltransferase (OST) complex.

The protein resides in the membrane. It participates in protein modification; protein glycosylation. Its function is as follows. Specific component of the STT3A-containing form of the oligosaccharyl transferase (OST) complex that catalyzes the initial transfer of a defined glycan (Glc(3)Man(9)GlcNAc(2) in eukaryotes) from the lipid carrier dolichol-pyrophosphate to an asparagine residue within an Asn-X-Ser/Thr consensus motif in nascent polypeptide chains, the first step in protein N-glycosylation. N-glycosylation occurs cotranslationally and the complex associates with the Sec61 complex at the channel-forming translocon complex that mediates protein translocation across the endoplasmic reticulum (ER). All subunits are required for a maximal enzyme activity. The chain is Oligosaccharyltransferase complex subunit ostc-A from Xenopus laevis (African clawed frog).